We begin with the raw amino-acid sequence, 166 residues long: SsrA-binding protein (166 aa).

Belongs to the SmpB family.

It is found in the cytoplasm. Its function is as follows. Required for rescue of stalled ribosomes mediated by trans-translation. Binds to transfer-messenger RNA (tmRNA), required for stable association of tmRNA with ribosomes. tmRNA and SmpB together mimic tRNA shape, replacing the anticodon stem-loop with SmpB. tmRNA is encoded by the ssrA gene; the 2 termini fold to resemble tRNA(Ala) and it encodes a 'tag peptide', a short internal open reading frame. During trans-translation Ala-aminoacylated tmRNA acts like a tRNA, entering the A-site of stalled ribosomes, displacing the stalled mRNA. The ribosome then switches to translate the ORF on the tmRNA; the nascent peptide is terminated with the 'tag peptide' encoded by the tmRNA and targeted for degradation. The ribosome is freed to recommence translation, which seems to be the essential function of trans-translation. In Parasynechococcus marenigrum (strain WH8102), this protein is SsrA-binding protein.